The sequence spans 288 residues: Energy-coupling factor transporter ATP-binding protein EcfA2 (288 aa).

Positions 3-245 (IKIENLTHVY…VDTLESVGLA (243 aa)) constitute an ABC transporter domain. 40-47 (GHTGSGKS) contacts ATP.

It belongs to the ABC transporter superfamily. Energy-coupling factor EcfA family. Forms a stable energy-coupling factor (ECF) transporter complex composed of 2 membrane-embedded substrate-binding proteins (S component), 2 ATP-binding proteins (A component) and 2 transmembrane proteins (T component).

The protein resides in the cell membrane. In terms of biological role, ATP-binding (A) component of a common energy-coupling factor (ECF) ABC-transporter complex. Unlike classic ABC transporters this ECF transporter provides the energy necessary to transport a number of different substrates. This chain is Energy-coupling factor transporter ATP-binding protein EcfA2, found in Clostridium tetani (strain Massachusetts / E88).